The primary structure comprises 324 residues: Proto-oncogene Mas (324 aa).

Residues 1 to 35 (MDQSNMTSFAEEKAMNTSSRNASLGTSHPPIPIVH) lie on the Extracellular side of the membrane. N-linked (GlcNAc...) asparagine glycosylation is found at Asn5, Asn16, and Asn21. Residues 36-60 (WVIMSISPLGFVENGILLWFLCFRM) form a helical membrane-spanning segment. The Cytoplasmic portion of the chain corresponds to 61 to 64 (RRNP). Residues 65-86 (FTVYITHLSIADISLLFCIFIL) form a helical membrane-spanning segment. At 87–103 (SIDYALDYELSSGHYYT) the chain is on the extracellular side. Residues 104–127 (IVTLSVTFLFGYNTGLYLLTAISV) traverse the membrane as a helical segment. The Cytoplasmic segment spans residues 128–148 (ERCLSVLYPIWYRCHRPKHQS). The helical transmembrane segment at 149 to 171 (AFVCALLWALSCLVTTMEYVMCI) threads the bilayer. At 172–184 (DSGEESHSQSDCR) the chain is on the extracellular side. Residues 185 to 205 (AVIIFIAILSFLVFTPLMLVS) traverse the membrane as a helical segment. Residues 206-223 (STILVVKIRKNTWASHSS) are Cytoplasmic-facing. Residues 224–244 (KLYIVIMVTIIIFLIFAMPMR) traverse the membrane as a helical segment. Over 245-262 (VLYLLYYEYWSTFGNLHN) the chain is Extracellular. Residues 263-283 (ISLLFSTINSSANPFIYFFVG) traverse the membrane as a helical segment. Residues 284 to 324 (SSKKKRFRESLKVVLTRAFKDEMQPRRQEGNGNTVSIETVV) are Cytoplasmic-facing.

It belongs to the G-protein coupled receptor 1 family. Interacts with AGTR1. Interacts with FLNA (via filamin repeat 21); increases PKA-mediated phosphorylation of FLNA. Expressed in platelets.

The protein resides in the cell membrane. Functionally, receptor for angiotensin 1-7. Acts specifically as a functional antagonist of AGTR1 (angiotensin-2 type 1 receptor), although it up-regulates AGTR1 receptor levels. Positive regulation of AGTR1 levels occurs through activation of the G-proteins GNA11 and GNAQ, and stimulation of the protein kinase C signaling cascade. The antagonist effect on AGTR1 function is probably due to AGTR1 being physically altered by MAS1. The chain is Proto-oncogene Mas (Mas1) from Rattus norvegicus (Rat).